The sequence spans 282 residues: Homeobox-leucine zipper protein HAT1 (282 aa).

Residues 71-134 (LEEETGVSSP…EEDYGGETCR (64 aa)) form a disordered region. The span at 76 to 89 (GVSSPNSTISSTVS) shows a compositional bias: low complexity. The segment at residues 132–191 (TCRKKLRLSKDQSAVLEDTFKEHNTLNPKQKLALAKKLGLTARQVEVWFQNRRARTKLKQ) is a DNA-binding region (homeobox). The leucine-zipper stretch occupies residues 199 to 220 (LKRCVEKLTEENRRLEKEAAEL).

This sequence belongs to the HD-ZIP homeobox family. Class II subfamily. In terms of assembly, interacts with BZIP30.

The protein localises to the nucleus. Functionally, probable transcription factor. The chain is Homeobox-leucine zipper protein HAT1 (HAT1) from Arabidopsis thaliana (Mouse-ear cress).